A 562-amino-acid polypeptide reads, in one-letter code: Carboxylesterase 1E (562 aa).

Positions Met-1–Gly-19 are cleaved as a signal peptide. Asn-80 is a glycosylation site (N-linked (GlcNAc...) asparagine). A disulfide bridge connects residues Cys-88 and Cys-117. The Acyl-ester intermediate role is filled by Ser-222. Cys-274 and Cys-285 are oxidised to a cystine. Asn-276 is a glycosylation site (N-linked (GlcNAc...) asparagine). Residues Glu-354 and His-467 each act as charge relay system in the active site. N-linked (GlcNAc...) asparagine glycosylation occurs at Asn-490. Positions His-559–Leu-562 match the Prevents secretion from ER motif.

It belongs to the type-B carboxylesterase/lipase family.

It is found in the endoplasmic reticulum lumen. The protein resides in the microsome membrane. It carries out the reaction a carboxylic ester + H2O = an alcohol + a carboxylate + H(+). The enzyme catalyses all-trans-retinyl hexadecanoate + H2O = all-trans-retinol + hexadecanoate + H(+). In terms of biological role, involved in the detoxification of xenobiotics and in the activation of ester and amide prodrugs. Hydrolyzes retinyl esters. The polypeptide is Carboxylesterase 1E (Mus musculus (Mouse)).